We begin with the raw amino-acid sequence, 23 residues long: Cytochrome c3-1 (23 aa).

The interval 1–23 (AAPKAPADGLKMDKTKQXVVFNH) is disordered. His23 serves as a coordination point for heme.

In terms of processing, binds 4 heme groups per subunit.

Its subcellular location is the periplasm. Participates in sulfate respiration coupled with phosphorylation by transferring electrons from the enzyme dehydrogenase to ferredoxin. The chain is Cytochrome c3-1 from Nitratidesulfovibrio vulgaris (Desulfovibrio vulgaris).